The following is a 70-amino-acid chain: uncharacterized protein (70 aa).

This is an uncharacterized protein from Torque teno tamarin virus (isolate So-TTV2).